Here is a 141-residue protein sequence, read N- to C-terminus: Nucleoside diphosphate kinase (141 aa).

The ATP site is built by lysine 11, phenylalanine 59, arginine 87, threonine 93, arginine 104, and asparagine 114. The active-site Pros-phosphohistidine intermediate is histidine 117.

This sequence belongs to the NDK family. As to quaternary structure, homotetramer. Mg(2+) is required as a cofactor.

Its subcellular location is the cytoplasm. The catalysed reaction is a 2'-deoxyribonucleoside 5'-diphosphate + ATP = a 2'-deoxyribonucleoside 5'-triphosphate + ADP. The enzyme catalyses a ribonucleoside 5'-diphosphate + ATP = a ribonucleoside 5'-triphosphate + ADP. Major role in the synthesis of nucleoside triphosphates other than ATP. The ATP gamma phosphate is transferred to the NDP beta phosphate via a ping-pong mechanism, using a phosphorylated active-site intermediate. This is Nucleoside diphosphate kinase from Halorhodospira halophila (strain DSM 244 / SL1) (Ectothiorhodospira halophila (strain DSM 244 / SL1)).